Reading from the N-terminus, the 57-residue chain is Protein Ric1 (57 aa).

A run of 2 helical transmembrane segments spans residues 8–28 (IPRL…QVGC) and 34–54 (INCL…VYIL).

It belongs to the UPF0057 (PMP3) family.

The protein localises to the membrane. The polypeptide is Protein Ric1 (RIC1) (Phytophthora infestans (Potato late blight agent)).